The sequence spans 292 residues: 2,3-dihydroxybenzoate decarboxylase (292 aa).

C263 is a catalytic residue.

This sequence belongs to the metallo-dependent hydrolases superfamily. As to quaternary structure, homotetramer.

The catalysed reaction is 2,3-dihydroxybenzoate + H(+) = catechol + CO2. It functions in the pathway aromatic compound metabolism; benzoate degradation via hydroxylation. In Aspergillus niger, this protein is 2,3-dihydroxybenzoate decarboxylase.